The primary structure comprises 401 residues: Acetate kinase (401 aa).

Position 7 (asparagine 7) interacts with Mg(2+). Lysine 14 contributes to the ATP binding site. Arginine 92 provides a ligand contact to substrate. Aspartate 149 serves as the catalytic Proton donor/acceptor. ATP contacts are provided by residues 209-213 (HLGNG), 283-285 (DAR), and 331-335 (GLGEN). Residue glutamate 385 participates in Mg(2+) binding.

It belongs to the acetokinase family. In terms of assembly, homodimer. Requires Mg(2+) as cofactor. The cofactor is Mn(2+).

The protein localises to the cytoplasm. It catalyses the reaction acetate + ATP = acetyl phosphate + ADP. The protein operates within metabolic intermediate biosynthesis; acetyl-CoA biosynthesis; acetyl-CoA from acetate: step 1/2. Functionally, catalyzes the formation of acetyl phosphate from acetate and ATP. Can also catalyze the reverse reaction. This chain is Acetate kinase, found in Helicobacter pylori (strain Shi470).